A 256-amino-acid polypeptide reads, in one-letter code: MLAKFGLCAVFLVLGTAATFDTDPEEASPRRARFSSNSPSDVARCLNGALAVGCGTFACLENSTCDTDGMHDICQLFFHTAATFNTQGKTFVKESLRCIANGVTSKVFQTIRRCGVFQRMISEVQEECYSRLDICGVARSNPEAIGEVVQVPAHFPNRYYSTLLQSLLACDEETVAVVRAGLVARLGPDMETLFQLLQNKHCPQGSNQGPNSAPAGWRWPMGSPPSFKIQPSMRGRDPTHLFARKRSVEALEREME.

Positions 1-18 (MLAKFGLCAVFLVLGTAA) are cleaved as a signal peptide. Positions 19–33 (TFDTDPEEASPRRAR) are excised as a propeptide. The N-linked (GlcNAc...) asparagine glycan is linked to Asn-62. Positions 204–241 (QGSNQGPNSAPAGWRWPMGSPPSFKIQPSMRGRDPTHL) are disordered.

It belongs to the stanniocalcin family. Homodimer; disulfide-linked. In terms of tissue distribution, produced and secreted by the corpuscles of Stannius.

Its subcellular location is the secreted. Its function is as follows. Its primary function is the prevention of hypercalcemia. Upon release into the circulation, it lowers calcium transport by the gills, thereby reducing its rate of influx from the environment into the extracellular compartment. STC also stimulates phosphate reabsorption by renal proximal tubules. The consequence of this action is increased levels of plasma phosphate, which combines with excess calcium and promotes its disposal into bone and scales. The chain is Stanniocalcin (stc) from Oncorhynchus mykiss (Rainbow trout).